The chain runs to 485 residues: Aspartyl/glutamyl-tRNA(Asn/Gln) amidotransferase subunit B (485 aa).

Belongs to the GatB/GatE family. GatB subfamily. In terms of assembly, heterotrimer of A, B and C subunits.

It catalyses the reaction L-glutamyl-tRNA(Gln) + L-glutamine + ATP + H2O = L-glutaminyl-tRNA(Gln) + L-glutamate + ADP + phosphate + H(+). It carries out the reaction L-aspartyl-tRNA(Asn) + L-glutamine + ATP + H2O = L-asparaginyl-tRNA(Asn) + L-glutamate + ADP + phosphate + 2 H(+). Its function is as follows. Allows the formation of correctly charged Asn-tRNA(Asn) or Gln-tRNA(Gln) through the transamidation of misacylated Asp-tRNA(Asn) or Glu-tRNA(Gln) in organisms which lack either or both of asparaginyl-tRNA or glutaminyl-tRNA synthetases. The reaction takes place in the presence of glutamine and ATP through an activated phospho-Asp-tRNA(Asn) or phospho-Glu-tRNA(Gln). The polypeptide is Aspartyl/glutamyl-tRNA(Asn/Gln) amidotransferase subunit B (Borreliella afzelii (strain PKo) (Borrelia afzelii)).